A 622-amino-acid polypeptide reads, in one-letter code: E3 ubiquitin-protein ligase RNF12-A (622 aa).

3 disordered regions span residues 1–26 (MESA…MDRL), 67–386 (RLQQ…ESER), and 473–514 (NANA…NSRG). The span at 11–21 (SIEQSESQRQS) shows a compositional bias: low complexity. 2 stretches are compositionally biased toward polar residues: residues 110–138 (SVRQ…NPNS) and 147–163 (INVN…SLDQ). A compositionally biased stretch (basic and acidic residues) spans 216–242 (RSPDQRRTRARTDRSRSPLHHAVDPPI). Over residues 247–256 (HSSSQTVDTS) the composition is skewed to polar residues. A compositionally biased stretch (low complexity) spans 272–289 (SSQVQNSSSSNETEGSSR). Residues 300–317 (VLGTEGQSQSTVHLSNPE) are compositionally biased toward polar residues. Over residues 318–331 (TRSSSQTPQTDSST) the composition is skewed to low complexity. Over residues 332 to 341 (NAETTGTGQR) the composition is skewed to polar residues. Residues 355-365 (RPGDYRQRDSI) are compositionally biased toward basic and acidic residues. Residues 366–382 (ANRTRSRSQTPNNTVTY) are compositionally biased toward polar residues. The RING-type; atypical zinc finger occupies 568–609 (CSVCITEYTEGNKLRKLPCSHEYHIHCIDRWLSENSTCPICR). A PDZ-binding motif is present at residues 619–622 (ESIV).

Belongs to the RNF12 family. In terms of assembly, forms homodimers through the C-terminal region. The N-terminus interacts with the homeobox of LIM/homeobox factor lhx1/lim1, with lhx3/lim3 and lhx5/lim5, and with the N-terminus of ldb1. As to expression, shows overlapping expression with lhx1/lim1 and ldb1 in the gastrula mesoderm, and expression overlaps with ldb1 throughout early embryogenesis. After gastrulation, expression is gradually restricted to tissues originated from the ectoderm, the neuroectoderm, neural crest and epidermis, and subsequently to the neural tube as well as the head and tailbud region.

It is found in the nucleus. The catalysed reaction is S-ubiquitinyl-[E2 ubiquitin-conjugating enzyme]-L-cysteine + [acceptor protein]-L-lysine = [E2 ubiquitin-conjugating enzyme]-L-cysteine + N(6)-ubiquitinyl-[acceptor protein]-L-lysine.. Its pathway is protein modification; protein ubiquitination. Functionally, acts as an E3 ubiquitin-protein ligase specific for ldb1, mediating ubiquitination and proteasome-dependent degradation of excess ldb1 in a RING-dependent manner. Does not degrade ldb1 bound to lhx1/lim1, nor lim1 itself and thus contributes to the establishment of proper ldb1-lhx1/lim1 stoichiometry and the formation of a ldb1-lhx1/lim1 complex. Interferes with Spemann organizer function and suppresses secondary axis formation induced by ldb1 and lhx1/lim1. This chain is E3 ubiquitin-protein ligase RNF12-A (rnf12-a), found in Xenopus laevis (African clawed frog).